A 90-amino-acid chain; its full sequence is UPF0213 protein Reut_B5558 (90 aa).

Residues Arg-5–Ala-80 form the GIY-YIG domain.

The protein belongs to the UPF0213 family.

In Cupriavidus pinatubonensis (strain JMP 134 / LMG 1197) (Cupriavidus necator (strain JMP 134)), this protein is UPF0213 protein Reut_B5558.